A 640-amino-acid polypeptide reads, in one-letter code: Threonine--tRNA ligase (640 aa).

A TGS domain is found at 1–60; that stretch reads MKITFPDGAVKEFEPGVSTADIAASISPGLKKKALAGKLNGELLDLVTPIHEDGAIEIVT. The interval 241–538 is catalytic; that stretch reads DHRKLGKELD…LIEEYKGAFP (298 aa). Residues Cys-334, His-385, and His-515 each contribute to the Zn(2+) site.

Belongs to the class-II aminoacyl-tRNA synthetase family. As to quaternary structure, homodimer. Zn(2+) serves as cofactor.

The protein resides in the cytoplasm. It carries out the reaction tRNA(Thr) + L-threonine + ATP = L-threonyl-tRNA(Thr) + AMP + diphosphate + H(+). Its function is as follows. Catalyzes the attachment of threonine to tRNA(Thr) in a two-step reaction: L-threonine is first activated by ATP to form Thr-AMP and then transferred to the acceptor end of tRNA(Thr). Also edits incorrectly charged L-seryl-tRNA(Thr). This Listeria monocytogenes serotype 4b (strain CLIP80459) protein is Threonine--tRNA ligase.